A 148-amino-acid chain; its full sequence is Transcription antitermination protein NusB (148 aa).

This sequence belongs to the NusB family.

Involved in transcription antitermination. Required for transcription of ribosomal RNA (rRNA) genes. Binds specifically to the boxA antiterminator sequence of the ribosomal RNA (rrn) operons. In Saccharopolyspora erythraea (strain ATCC 11635 / DSM 40517 / JCM 4748 / NBRC 13426 / NCIMB 8594 / NRRL 2338), this protein is Transcription antitermination protein NusB.